We begin with the raw amino-acid sequence, 218 residues long: MSDIDHLQQIAHLRREYTKGGLRRRDLTETPLPLFERWLAQACDAKLADPTAMVVATVDEHGQPYQRIVLLKHFDERGMVFYTNLGSRKAHHLENNPRISLLFPWHMLERQVMVTGKAERLSTLEVVKYFHSRPRDSQIGAWVSKQSSRISARGVLESKFLELKQKFQQGEVPLPSFWGGFRVSLEQVEFWQGGEHRLHDRFLYQRDGDGWKIDRLAP.

Residues 14–17 (RREY) and Lys-72 each bind substrate. FMN contacts are provided by residues 67 to 72 (RIVLLK), 82 to 83 (YT), Arg-88, Lys-89, and Gln-111. Substrate contacts are provided by Tyr-129, Arg-133, and Ser-137. Residues 146-147 (QS) and Trp-191 each bind FMN. 197 to 199 (RLH) contacts substrate. Residue Arg-201 participates in FMN binding.

It belongs to the pyridoxamine 5'-phosphate oxidase family. In terms of assembly, homodimer. FMN is required as a cofactor.

It carries out the reaction pyridoxamine 5'-phosphate + O2 + H2O = pyridoxal 5'-phosphate + H2O2 + NH4(+). The enzyme catalyses pyridoxine 5'-phosphate + O2 = pyridoxal 5'-phosphate + H2O2. The protein operates within cofactor metabolism; pyridoxal 5'-phosphate salvage; pyridoxal 5'-phosphate from pyridoxamine 5'-phosphate: step 1/1. It functions in the pathway cofactor metabolism; pyridoxal 5'-phosphate salvage; pyridoxal 5'-phosphate from pyridoxine 5'-phosphate: step 1/1. Functionally, catalyzes the oxidation of either pyridoxine 5'-phosphate (PNP) or pyridoxamine 5'-phosphate (PMP) into pyridoxal 5'-phosphate (PLP). In Cronobacter sakazakii (strain ATCC BAA-894) (Enterobacter sakazakii), this protein is Pyridoxine/pyridoxamine 5'-phosphate oxidase.